The sequence spans 67 residues: MPQGTVKWFNAEKGFGFIAPEDGSADVFVHYTEIQGSGFRTLEENQKVEFEVGQSPKGPQATGVRTI.

Residues Met1–Thr66 form the CSD domain. Residue Lys47 forms an Isoglutamyl lysine isopeptide (Lys-Gln) (interchain with Q-Cter in protein Pup) linkage.

Its subcellular location is the cytoplasm. This chain is Probable cold shock protein A (cspA), found in Mycolicibacterium smegmatis (strain ATCC 700084 / mc(2)155) (Mycobacterium smegmatis).